The following is a 205-amino-acid chain: Rho-related protein racI (205 aa).

12-19 (GDSKTGKT) provides a ligand contact to GTP. An Effector region motif is present at residues 34–42 (YVPSHVDAT). GTP-binding positions include 59 to 63 (DSSAL) and 119 to 122 (TKCD). Cysteine 202 carries the post-translational modification Cysteine methyl ester. Cysteine 202 carries the S-geranylgeranyl cysteine lipid modification. A propeptide spans 203 to 205 (IIQ) (removed in mature form).

This sequence belongs to the small GTPase superfamily. Rho family.

Its subcellular location is the cell membrane. This chain is Rho-related protein racI (racI), found in Dictyostelium discoideum (Social amoeba).